The sequence spans 543 residues: Glucose-6-phosphate isomerase (543 aa).

Catalysis depends on Glu353, which acts as the Proton donor. Residues His384 and Lys504 contribute to the active site.

The protein belongs to the GPI family.

It is found in the cytoplasm. It carries out the reaction alpha-D-glucose 6-phosphate = beta-D-fructose 6-phosphate. Its pathway is carbohydrate biosynthesis; gluconeogenesis. The protein operates within carbohydrate degradation; glycolysis; D-glyceraldehyde 3-phosphate and glycerone phosphate from D-glucose: step 2/4. In terms of biological role, catalyzes the reversible isomerization of glucose-6-phosphate to fructose-6-phosphate. The polypeptide is Glucose-6-phosphate isomerase (Roseiflexus sp. (strain RS-1)).